A 437-amino-acid polypeptide reads, in one-letter code: Acyl-coenzyme A thioesterase 9, mitochondrial (437 aa).

The transit peptide at 1–21 (MRRAALRLCTLSKGLLAPSRG) directs the protein to the mitochondrion. 2 consecutive HotDog ACOT-type domains span residues 84–207 (SYIE…RDSE) and 287–399 (ENSK…EKEV). Lysine 101 carries the N6-acetyllysine modification.

Belongs to the acyl coenzyme A hydrolase family. In terms of assembly, interacts with NYAP1, NYAP2 and MYO16.

The protein localises to the mitochondrion. It localises to the mitochondrion matrix. Its subcellular location is the mitochondrion inner membrane. The catalysed reaction is butanoyl-CoA + H2O = butanoate + CoA + H(+). The enzyme catalyses propanoyl-CoA + H2O = propanoate + CoA + H(+). It carries out the reaction hexadecanoyl-CoA + H2O = hexadecanoate + CoA + H(+). It catalyses the reaction octanoyl-CoA + H2O = octanoate + CoA + H(+). The catalysed reaction is decanoyl-CoA + H2O = decanoate + CoA + H(+). The enzyme catalyses tetradecanoyl-CoA + H2O = tetradecanoate + CoA + H(+). It carries out the reaction 4,8-dimethylnonanoyl-CoA + H2O = 4,8-dimethylnonanoate + CoA + H(+). It catalyses the reaction 3-methylbutanoyl-CoA + H2O = 3-methylbutanoate + CoA + H(+). The catalysed reaction is 2-methylpropanoyl-CoA + H2O = 2-methylpropanoate + CoA + H(+). It functions in the pathway lipid metabolism; fatty acid metabolism. With respect to regulation, strongly inhibited by NADH and CoA. Its function is as follows. Mitochondrial acyl-CoA thioesterase. Catalyzes the hydrolysis of acyl-CoAs into free fatty acids and coenzyme A (CoA), regulating their respective intracellular levels. Regulates both mitochondrial lipid and amino acid metabolism. This is Acyl-coenzyme A thioesterase 9, mitochondrial (ACOT9) from Bos taurus (Bovine).